Reading from the N-terminus, the 125-residue chain is DNA-directed RNA polymerase subunit omega (125 aa).

Belongs to the RNA polymerase subunit omega family. As to quaternary structure, the RNAP catalytic core consists of 2 alpha, 1 beta, 1 beta' and 1 omega subunit. When a sigma factor is associated with the core the holoenzyme is formed, which can initiate transcription.

The catalysed reaction is RNA(n) + a ribonucleoside 5'-triphosphate = RNA(n+1) + diphosphate. Promotes RNA polymerase assembly. Latches the N- and C-terminal regions of the beta' subunit thereby facilitating its interaction with the beta and alpha subunits. In Zymomonas mobilis subsp. mobilis (strain ATCC 31821 / ZM4 / CP4), this protein is DNA-directed RNA polymerase subunit omega.